Reading from the N-terminus, the 212-residue chain is ATP synthase F(0) complex subunit a (212 aa).

6 helical membrane passes run 3–23 (MMGIPLILIAIFLPTLLIYTS), 58–78 (WAAMLMTLMIXLLSMNLLGLL), 87–107 (QLSMNMALAIPLWLATVLTGL), 128–148 (IPLLIIIETVSLFIRPLALGV), 169–189 (FVLLPMMTLTALSTFIVLVLL), and 192–212 (LEIAVAMIQAYVFTLLLTLYL).

This sequence belongs to the ATPase A chain family. In terms of assembly, component of the ATP synthase complex composed at least of ATP5F1A/subunit alpha, ATP5F1B/subunit beta, ATP5MC1/subunit c (homooctomer), MT-ATP6/subunit a, MT-ATP8/subunit 8, ATP5ME/subunit e, ATP5MF/subunit f, ATP5MG/subunit g, ATP5MK/subunit k, ATP5MJ/subunit j, ATP5F1C/subunit gamma, ATP5F1D/subunit delta, ATP5F1E/subunit epsilon, ATP5PF/subunit F6, ATP5PB/subunit b, ATP5PD/subunit d, ATP5PO/subunit OSCP. ATP synthase complex consists of a soluble F(1) head domain (subunits alpha(3) and beta(3)) - the catalytic core - and a membrane F(0) domain - the membrane proton channel (subunits c, a, 8, e, f, g, k and j). These two domains are linked by a central stalk (subunits gamma, delta, and epsilon) rotating inside the F1 region and a stationary peripheral stalk (subunits F6, b, d, and OSCP). Interacts with DNAJC30; interaction is direct.

The protein localises to the mitochondrion inner membrane. It catalyses the reaction H(+)(in) = H(+)(out). Its function is as follows. Subunit a, of the mitochondrial membrane ATP synthase complex (F(1)F(0) ATP synthase or Complex V) that produces ATP from ADP in the presence of a proton gradient across the membrane which is generated by electron transport complexes of the respiratory chain. ATP synthase complex consist of a soluble F(1) head domain - the catalytic core - and a membrane F(1) domain - the membrane proton channel. These two domains are linked by a central stalk rotating inside the F(1) region and a stationary peripheral stalk. During catalysis, ATP synthesis in the catalytic domain of F(1) is coupled via a rotary mechanism of the central stalk subunits to proton translocation. With the subunit c (ATP5MC1), forms the proton-conducting channel in the F(0) domain, that contains two crucial half-channels (inlet and outlet) that facilitate proton movement from the mitochondrial intermembrane space (IMS) into the matrix. Protons are taken up via the inlet half-channel and released through the outlet half-channel, following a Grotthuss mechanism. In Tropidurus hispidus (Peters' lava lizard), this protein is ATP synthase F(0) complex subunit a.